We begin with the raw amino-acid sequence, 426 residues long: MTSSADLTNLKELLSLYKSLRFSDSVAIEKYNSLVEWGTSTYWKIGVQKVTNVETSISDYYDEVKNKPFNIDPGYYIFLPVYFGSVFIYSKGKNMVELGSGNSFQIPDEIRSACNKVLDSDNGIDFLRFVLLNNRWIMEDAISKYQSPVNIFKLASEYGLNIPNYLEIEIEEDTLFDDELYSIMERSFDDTFPKISISYIKLGELKRQVVDFFKFSFMYIESIKVDRIGDNIFIPSVITKSGKKILVKDVDHLIRSKVREHTFVKVKKKNTFSILYDYDGNGTETRGEVIKRIIDTIGRDYYVNGKYFSKVGIAGLKQLTNKLDINECATVDELVDEINKSGTVKRKIKNQSVFDLSRECLGYPEADFITLVNNMRFKIENCKVVNFNIENTNCLNNPSIETIYGNFNQFVSIFNTVTDVKKRLFE.

This sequence belongs to the orthopoxvirus OPG148 family. Interacts with the DNA polymerase catalytic subunit OPG071. Interacts with UDG/OPG116. Component of the uracil-DNA glycosylase(UDG)-OPG148-polymerase complex; OPG148 and UDG form a heterodimeric processivity factor that associates with OPG071 to form the processive polymerase holoenzyme. Interacts with OPG117.

Its function is as follows. Plays an essential role in viral DNA replication by acting as the polymerase processivity factor together with protein OPG116. Serves as a bridge which links the DNA polymerase OPG071 and the uracil DNA glycosylase. The sequence is that of DNA polymerase processivity factor component OPG148 (OPG148) from Cynomys gunnisoni (Gunnison's prairie dog).